A 327-amino-acid polypeptide reads, in one-letter code: Alkene monooxygenase system, ferredoxin--NAD(+) reductase component (327 aa).

A 2Fe-2S ferredoxin-type domain is found at 1–89 (MRLNDGRSFS…DLEINVRAGD (89 aa)). [2Fe-2S] cluster is bound by residues cysteine 32, cysteine 37, cysteine 40, and cysteine 73. Residues 96–194 (PRRHAARVTV…EGPYGRAYLR (99 aa)) enclose the FAD-binding FR-type domain.

Belongs to the bacterial ring-hydroxylating dioxygenase ferredoxin reductase family. As to quaternary structure, monomer. The alkene monooxygenase multicomponent enzyme system is composed of an electron transfer component and a monooxygenase component interacting with the effector protein XamoD. The electron transfer component is composed of a ferredoxin reductase (XamoF) and a ferredoxin (XamoC), and the monooxygenase component is formed by a heterohexamer (dimer of heterotrimers) of two alpha subunits (XamoA), two beta subunits (XamoE) and two gamma subunits (XamoB). The cofactor is FAD. Requires [2Fe-2S] cluster as cofactor.

The protein resides in the cytoplasm. The catalysed reaction is 2 reduced [2Fe-2S]-[ferredoxin] + NAD(+) + H(+) = 2 oxidized [2Fe-2S]-[ferredoxin] + NADH. Reductase component of the alkene monooxygenase multicomponent enzyme system which catalyzes the O2- and NADH-dependent epoxidation of short chain (C2 to C6) alkenes to their corresponding epoxides. Ferredoxin reductase catalyzes the transfer of electrons from NADH to ferredoxin (XamoC). NADPH is also effective but with a rate approximately 3-fold lower than with NADH. The protein is Alkene monooxygenase system, ferredoxin--NAD(+) reductase component of Xanthobacter autotrophicus (strain ATCC BAA-1158 / Py2).